Reading from the N-terminus, the 260-residue chain is UPF0246 protein Bmul_1054/BMULJ_02209 (260 aa).

The protein belongs to the UPF0246 family.

The chain is UPF0246 protein Bmul_1054/BMULJ_02209 from Burkholderia multivorans (strain ATCC 17616 / 249).